The sequence spans 62 residues: Photosystem II reaction center protein Z (62 aa).

2 consecutive transmembrane segments (helical) span residues 8–28 (ALFA…VAFA) and 41–61 (FQGV…NSLV).

Belongs to the PsbZ family. As to quaternary structure, PSII is composed of 1 copy each of membrane proteins PsbA, PsbB, PsbC, PsbD, PsbE, PsbF, PsbH, PsbI, PsbJ, PsbK, PsbL, PsbM, PsbT, PsbY, PsbZ, Psb30/Ycf12, at least 3 peripheral proteins of the oxygen-evolving complex and a large number of cofactors. It forms dimeric complexes.

The protein resides in the plastid. It is found in the chloroplast thylakoid membrane. Functionally, may control the interaction of photosystem II (PSII) cores with the light-harvesting antenna, regulates electron flow through the 2 photosystem reaction centers. PSII is a light-driven water plastoquinone oxidoreductase, using light energy to abstract electrons from H(2)O, generating a proton gradient subsequently used for ATP formation. This Nephroselmis olivacea (Green alga) protein is Photosystem II reaction center protein Z.